Here is an 85-residue protein sequence, read N- to C-terminus: Protein Vpu (85 aa).

The Extracellular segment spans residues 1–7 (MHHRDLL). The chain crosses the membrane as a helical span at residues 8 to 28 (AIIIISALLFINVILWGFILR). The Cytoplasmic segment spans residues 29–85 (KYLEQKEQDRKEREILERLRRIREIRDDSDYESNGEEEQEVMDLVLSHGFDNPMFEP).

The protein belongs to the HIV-1 VPU protein family. In terms of assembly, homopentamer. Interacts with host CD4 and BRTC; these interactions induce proteasomal degradation of CD4. Interacts with host BST2; this interaction leads to the degradation of host BST2. Interacts with host FBXW11. Interacts with host AP1M1; this interaction plays a role in the mistrafficking and subsequent degradation of host BST2. Interacts with host RANBP2; this interaction allows Vpu to down-regulate host BLM sumoylation. Post-translationally, phosphorylated by host CK2. This phosphorylation is necessary for interaction with human BTRC and degradation of CD4.

The protein localises to the host membrane. With respect to regulation, ion channel activity is inhibited by hexamethylene amiloride in vitro. Enhances virion budding by targeting host CD4 and Tetherin/BST2 to proteasome degradation. Degradation of CD4 prevents any unwanted premature interactions between viral Env and its host receptor CD4 in the endoplasmic reticulum. Degradation of antiretroviral protein Tetherin/BST2 is important for virion budding, as BST2 tethers new viral particles to the host cell membrane. Mechanistically, Vpu bridges either CD4 or BST2 to BTRC, a substrate recognition subunit of the Skp1/Cullin/F-box protein E3 ubiquitin ligase, induces their ubiquitination and subsequent proteasomal degradation. The alteration of the E3 ligase specificity by Vpu seems to promote the degradation of host IKBKB, leading to NF-kappa-B down-regulation and subsequent apoptosis. Acts as a viroporin that forms an oligomeric ion channel in membranes. Modulates the host DNA repair mechanisms to promote degradation of nuclear viral cDNA in cells that are already productively infected in order to suppress immune sensing and proviral hyper-integration (superinfection). Manipulates PML-NBs and modulates SUMOylation of host BLM protein thereby enhancing its DNA-end processing activity toward viral unintegrated linear DNA. Also inhibits RAD52-mediated homologous repair of viral cDNA, preventing the generation of dead-end circular forms of single copies of the long terminal repeat and permitting sustained nucleolytic attack. In Human immunodeficiency virus type 1 group O (isolate ANT70) (HIV-1), this protein is Protein Vpu.